Reading from the N-terminus, the 384-residue chain is 8-amino-7-oxononanoate synthase (384 aa).

Arg21 is a substrate binding site. Residue 108–109 (GF) coordinates pyridoxal 5'-phosphate. Residue His133 participates in substrate binding. Positions 179, 207, and 233 each coordinate pyridoxal 5'-phosphate. At Lys236 the chain carries N6-(pyridoxal phosphate)lysine. A substrate-binding site is contributed by Thr352.

Belongs to the class-II pyridoxal-phosphate-dependent aminotransferase family. BioF subfamily. In terms of assembly, homodimer. Pyridoxal 5'-phosphate is required as a cofactor.

The catalysed reaction is 6-carboxyhexanoyl-[ACP] + L-alanine + H(+) = (8S)-8-amino-7-oxononanoate + holo-[ACP] + CO2. The protein operates within cofactor biosynthesis; biotin biosynthesis. In terms of biological role, catalyzes the decarboxylative condensation of pimeloyl-[acyl-carrier protein] and L-alanine to produce 8-amino-7-oxononanoate (AON), [acyl-carrier protein], and carbon dioxide. In Escherichia coli O8 (strain IAI1), this protein is 8-amino-7-oxononanoate synthase.